We begin with the raw amino-acid sequence, 358 residues long: Mesaconyl-CoA hydratase (358 aa).

Belongs to the enoyl-CoA hydratase/isomerase family. Homodimer.

It carries out the reaction (2R,3S)-beta-methylmalyl-CoA = 2-methylfumaryl-CoA + H2O. Shows highest activity at 0.5 M KCl. Does not require divalent ions for activity. Functionally, involved in the methylaspartate cycle. Catalyzes the reversible hydration of mesaconyl-CoA (2-methylfumaryl-CoA) to yield beta-methylmalyl-CoA ((2R,3S)-beta-methylmalyl-CoA). Also shows activity with mesaconyl-C4-CoA (3-methylfumaryl-CoA), (S)-citramalyl-CoA and (S)-malyl-CoA. The polypeptide is Mesaconyl-CoA hydratase (Haloarcula hispanica (strain ATCC 33960 / DSM 4426 / JCM 8911 / NBRC 102182 / NCIMB 2187 / VKM B-1755)).